Here is a 156-residue protein sequence, read N- to C-terminus: Ribosomal RNA large subunit methyltransferase H (156 aa).

S-adenosyl-L-methionine-binding positions include leucine 73, glycine 104, and 123 to 128 (VSSLTL).

Belongs to the RNA methyltransferase RlmH family. In terms of assembly, homodimer.

It is found in the cytoplasm. It carries out the reaction pseudouridine(1915) in 23S rRNA + S-adenosyl-L-methionine = N(3)-methylpseudouridine(1915) in 23S rRNA + S-adenosyl-L-homocysteine + H(+). Specifically methylates the pseudouridine at position 1915 (m3Psi1915) in 23S rRNA. The chain is Ribosomal RNA large subunit methyltransferase H from Paraburkholderia xenovorans (strain LB400).